The sequence spans 170 residues: Tachykinin-4 (170 aa).

An N-terminal signal peptide occupies residues 1 to 16; sequence MLPLLALFLLIGPAVS. Residues 17–54 constitute a propeptide that is removed on maturation; it reads TTTRDREDLTFGAEAESWVTVNLKGIPVPSIELKLQEL. M66 bears the Methionine amide mark. Residues 67–170 constitute a propeptide that is removed on maturation; the sequence is GKRVEGVHPI…SQMMPRPSRP (104 aa). The tract at residues 107-170 is disordered; the sequence is QETNHQSAGP…SQMMPRPSRP (64 aa). The segment covering 123–140 has biased composition (polar residues); sequence SLQSQRGRSEPPNHQQHV.

Belongs to the tachykinin family.

It is found in the secreted. In terms of biological role, tachykinins are active peptides which excite neurons, evoke behavioral responses, are potent vasodilators and secretagogues, and contract (directly or indirectly) many smooth muscles. Hemokinin induces plasma extravasation, mast cell degranulation, muscle contraction, salivary secretion and scratching behavior. Increases sperm motility. Induces potent analgesic effects and may play a role in pain modulation. Promotes survival of bone marrow B lineage cells and of cultured LPS-stimulated pre-B cells and may act as an autocrine factor required for B-cell survival and proliferation. Lowers systemic arterial pressure following intravenous injection. Induces interferon-gamma production and may play a role in the inflammatory response. Shows potent affinity and specificity for the NK-1 receptor. The sequence is that of Tachykinin-4 from Rattus norvegicus (Rat).